We begin with the raw amino-acid sequence, 520 residues long: MSTTAYPDTILIIDFGSQVTQLIARRVREANVYCEIVPFQSADEAFKRLQPKGVILSGSPHSTTDIGSPRAPQAIFDAGIPVLGICYGEQTMCAQLGGNVESGHDREFGRAFLDVQEDSPLFAGIWAKGTRHQVWMSHGDRVTSLPDGFTIIGTSPNAPYAVIADEKRKYYGVQFHPEVVHTPDGAKLLQNFVHRIVGVKPGWTMGAYREQAVEAIRKQVGSGKVICALSGGVDSSVAALLAHEAVGDQLTCILVDHGLMRKDEVQQVVEMFREHYNLPLILVDASDRFIGALEGESDPEKKRKTIGRLFIEVFEEEARKLGGADFLVQGTLYPDVIESVSFTGGPSVTIKSHHNVGGLPERMKMQLVEPLRELFKDEVRLLGKELGLPDSFIGRHPFPGPGLAIRCPGGVTREKLEILREADAIYLDEIRKAGLYDAIWQAFAVLLPVQTVGVMGDGRTYEFVCALRAVTSVDGMTADFYHYDMNFLGNAATRIINEVRGINRVVYDVTSKPPGTIEWE.

In terms of domain architecture, Glutamine amidotransferase type-1 spans 9–202 (TILIIDFGSQ…VHRIVGVKPG (194 aa)). Residue Cys-86 is the Nucleophile of the active site. Catalysis depends on residues His-176 and Glu-178. The GMPS ATP-PPase domain maps to 203 to 395 (WTMGAYREQA…LGLPDSFIGR (193 aa)). 230–236 (SGGVDSS) is a binding site for ATP.

As to quaternary structure, homodimer.

The enzyme catalyses XMP + L-glutamine + ATP + H2O = GMP + L-glutamate + AMP + diphosphate + 2 H(+). Its pathway is purine metabolism; GMP biosynthesis; GMP from XMP (L-Gln route): step 1/1. In terms of biological role, catalyzes the synthesis of GMP from XMP. This is GMP synthase [glutamine-hydrolyzing] from Brucella melitensis biotype 2 (strain ATCC 23457).